Reading from the N-terminus, the 447-residue chain is Tol-Pal system protein TolB (447 aa).

The N-terminal stretch at 1 to 29 (MITMSRIRSLAAFAVFVILGVAAVLPAQA) is a signal peptide.

The protein belongs to the TolB family. The Tol-Pal system is composed of five core proteins: the inner membrane proteins TolA, TolQ and TolR, the periplasmic protein TolB and the outer membrane protein Pal. They form a network linking the inner and outer membranes and the peptidoglycan layer.

The protein localises to the periplasm. Part of the Tol-Pal system, which plays a role in outer membrane invagination during cell division and is important for maintaining outer membrane integrity. The chain is Tol-Pal system protein TolB from Paramagnetospirillum magneticum (strain ATCC 700264 / AMB-1) (Magnetospirillum magneticum).